The following is a 352-amino-acid chain: Adenosine deaminase (352 aa).

His-24 and His-26 together coordinate Zn(2+). Substrate is bound by residues His-26, Asp-28, and Gly-181. His-208 contacts Zn(2+). Catalysis depends on Glu-211, which acts as the Proton donor. Residue Asp-290 coordinates Zn(2+).

This sequence belongs to the metallo-dependent hydrolases superfamily. Adenosine and AMP deaminases family. Adenosine deaminase subfamily. It depends on Zn(2+) as a cofactor.

It carries out the reaction adenosine + H2O + H(+) = inosine + NH4(+). The enzyme catalyses 2'-deoxyadenosine + H2O + H(+) = 2'-deoxyinosine + NH4(+). Catalyzes the hydrolytic deamination of adenosine and 2-deoxyadenosine. The protein is Adenosine deaminase of Lactococcus lactis subsp. lactis (strain IL1403) (Streptococcus lactis).